We begin with the raw amino-acid sequence, 423 residues long: MSHNAFITEETIEPTDDGPLDGVTVAVKDNISTDGVRTTCGSEMLADYVPPYDATVVERLRDAGATIVGKTNMDEFGMGTTTETSAFGPTENPAAEGRVPGGSSGGSAAAVAAGDADLALGSDTGGSVRCPAAFCGVVGIKPTYGLVSRYGLVAYANSLEQIGPLAPTVEEAAELLDVIAGVDERDGTTREPPAGQPTYADAADGDVDGLTVGIPTELVDGADEGVRETFDDAVETLESAGATTQEVSLPSVETAVQAYYVIAMSEASSNLARFDGVRYGASGDEDGNWNESFAAAREAGFGEEVKRRILLGTYALSAGYHDKYYKQAQDARAWVKQDFDEAFESVDVLASPTMPVPPFERGESLEDPLKMYLADANTVPVNLANLPAISVPAGETADGPVGLQLVGPAFGEATLIRAGSALN.

A disordered region spans residues 1–20 (MSHNAFITEETIEPTDDGPL). The segment covering 10-19 (ETIEPTDDGP) has biased composition (acidic residues). Catalysis depends on charge relay system residues lysine 28 and serine 103. A disordered region spans residues 75–108 (EFGMGTTTETSAFGPTENPAAEGRVPGGSSGGSA). Catalysis depends on serine 127, which acts as the Acyl-ester intermediate. Residues 183-206 (DERDGTTREPPAGQPTYADAADGD) form a disordered region.

The protein belongs to the amidase family. GatA subfamily. In terms of assembly, heterotrimer of A, B and C subunits.

It catalyses the reaction L-glutamyl-tRNA(Gln) + L-glutamine + ATP + H2O = L-glutaminyl-tRNA(Gln) + L-glutamate + ADP + phosphate + H(+). Its function is as follows. Allows the formation of correctly charged Gln-tRNA(Gln) through the transamidation of misacylated Glu-tRNA(Gln) in organisms which lack glutaminyl-tRNA synthetase. The reaction takes place in the presence of glutamine and ATP through an activated gamma-phospho-Glu-tRNA(Gln). This is Glutamyl-tRNA(Gln) amidotransferase subunit A from Natronomonas pharaonis (strain ATCC 35678 / DSM 2160 / CIP 103997 / JCM 8858 / NBRC 14720 / NCIMB 2260 / Gabara) (Halobacterium pharaonis).